The primary structure comprises 167 residues: uncharacterized protein (167 aa).

Residues 1 to 23 form the signal peptide; sequence MKRLHKRFLLATFCALFTATLQA. Cysteines 39 and 77 form a disulfide.

It belongs to the fimbrial protein family.

The protein localises to the fimbrium. This is an uncharacterized protein from Escherichia coli (strain K12).